A 2893-amino-acid polypeptide reads, in one-letter code: Genome polyprotein (2893 aa).

The disordered stretch occupies residues 206–226; the sequence is VQAKPEMDNPNPGPDGEGEVE. The SF3 helicase domain occupies 1446 to 1612; sequence SKLKTDLMEM…EEKKRGCKHC (167 aa). An ATP-binding site is contributed by 1472-1479; it reads GASGIGKS. One can recognise a Peptidase C3 domain in the interval 2119–2345; that stretch reads GSTQQVDAAV…VAEPLVHEMF (227 aa). Catalysis depends on for 3C-like protease activity residues His2170, Asn2227, and Cys2307. The 131-residue stretch at 2633-2763 folds into the RdRp catalytic domain; that stretch reads THIVTGDYKN…NVSDNMIDKF (131 aa).

Specific enzymatic cleavages in vivo by the viral 3C-like protease yield three mature proteins. 3C-like protease is cleaved autocatalytically.

The protein localises to the virion. It carries out the reaction RNA(n) + a ribonucleoside 5'-triphosphate = RNA(n+1) + diphosphate. The enzyme catalyses ATP + H2O = ADP + phosphate + H(+). With respect to regulation, inhibited by Rupintrivir. In terms of biological role, capsid protein that assembles with the capsid proteins VP1 and VP3 to form a pseudo-T3 icosahedral capsid of about 40 nm. Functionally, capsid protein that assembles with the capsid proteins VP1 and VP2 to form a pseudo T3 icosahedral capsid of about 40 nm. Its function is as follows. Capsid protein that assembles with the capsid proteins VP2 and VP3 to form a pseudo T3 icosahedral capsid of about 40 nm. Displays RNA helix destabilizing and strand annealing acceleration activity. This activity is necessary at several points during genome replication, for example to separate duplexes that form after genome replication. In terms of biological role, cysteine protease that generates mature viral proteins from the precursor polyprotein. Functionally, replicates genomic and antigenomic RNA. In Deformed wing virus (DWV), this protein is Genome polyprotein.